Consider the following 377-residue polypeptide: RIB43A-like with coiled-coils protein 2 (377 aa).

Residues 217–246 adopt a coiled-coil conformation; that stretch reads NKNQVVELTERKRQEKQQEQEDNMTEITNL. The disordered stretch occupies residues 354–377; that stretch reads KQMNTASSSQPTEDYFSQFNTRSR.

It belongs to the RIB43A family. Microtubule inner protein component of sperm flagellar doublet microtubules.

It localises to the cytoplasm. It is found in the cytoskeleton. Its subcellular location is the cilium axoneme. The protein localises to the flagellum axoneme. Functionally, microtubule inner protein (MIP) part of the dynein-decorated doublet microtubules (DMTs) in cilia axoneme, which is required for motile cilia beating. The chain is RIB43A-like with coiled-coils protein 2 from Mus musculus (Mouse).